Consider the following 508-residue polypeptide: Cobyric acid synthase (508 aa).

A GATase cobBQ-type domain is found at 249-451; sequence EVDVAIINLP…IHGIFENSLF (203 aa). Cysteine 330 functions as the Nucleophile in the catalytic mechanism. Histidine 443 is an active-site residue.

Belongs to the CobB/CobQ family. CobQ subfamily.

It functions in the pathway cofactor biosynthesis; adenosylcobalamin biosynthesis. In terms of biological role, catalyzes amidations at positions B, D, E, and G on adenosylcobyrinic A,C-diamide. NH(2) groups are provided by glutamine, and one molecule of ATP is hydrogenolyzed for each amidation. The protein is Cobyric acid synthase of Caldanaerobacter subterraneus subsp. tengcongensis (strain DSM 15242 / JCM 11007 / NBRC 100824 / MB4) (Thermoanaerobacter tengcongensis).